A 1447-amino-acid chain; its full sequence is Netrin receptor DCC (1447 aa).

The first 25 residues, 1-25 (MENSLRCVWVPKLAFVLFGASLFSA), serve as a signal peptide directing secretion. 4 consecutive Ig-like C2-type domains span residues 26–135 (HLQV…AKVA), 139–229 (PLRF…AEVR), 234–326 (PGLH…AELT), and 331–416 (PWFL…AQLI). Residues 26-1097 (HLQVTGFQIK…GSVTPQKNSN (1072 aa)) are Extracellular-facing. 3 cysteine pairs are disulfide-bonded: Cys-61-Cys-117, Cys-161-Cys-212, and Cys-261-Cys-310. Asn-94 is a glycosylation site (N-linked (GlcNAc...) asparagine). 2 N-linked (GlcNAc...) asparagine glycosylation sites follow: Asn-299 and Asn-318. Cys-352 and Cys-400 are disulfide-bonded. 6 Fibronectin type-III domains span residues 431-524 (APRD…TQPE), 530-620 (PVEN…TLSD), 625-718 (PPQN…TPEN), 728-821 (QPSS…TDPT), 846-942 (PPVG…TYEA), and 947-1044 (APKD…TLKV). Asn-478 carries an N-linked (GlcNAc...) asparagine glycan. 2 N-linked (GlcNAc...) asparagine glycosylation sites follow: Asn-628 and Asn-702. Residues 1098–1122 (LLVIIVVTVGVITVLVVVIVAVICT) traverse the membrane as a helical segment. At 1123–1447 (RRSSAQQRKK…QLNAITGSAF (325 aa)) the chain is on the cytoplasmic side. 2 disordered regions span residues 1126–1152 (SAQQ…RPPD) and 1165–1222 (IEKP…TLER). Residues 1129 to 1143 (QRKKRATHSAGKRKG) show a composition bias toward basic residues. A Phosphoserine; by MAPK1 modification is found at Ser-1178. The segment covering 1179–1221 (PIQSCQDLTPVSHSQSETQLGSKSTSHSGQDTEEAGSSMSTLE) has biased composition (polar residues). At Thr-1187 the chain carries Phosphothreonine; by MAPK1. Ser-1267 bears the Phosphoserine; by MAPK1 mark. 2 disordered regions span residues 1288–1330 (SVDR…PSRT) and 1394–1419 (LLPV…SANV). Residues 1297-1310 (RSQSVSEGPTTQQP) show a composition bias toward polar residues. The interval 1432-1439 (LEGLMKQL) is interaction with MYO10.

It belongs to the immunoglobulin superfamily. DCC family. As to quaternary structure, interacts with the cytoplasmic part of UNC5A, UNC5B, UNC5C and probably UNC5D. Interacts with DSCAM. Interacts with PTK2/FAK1 and MAPK1. Interacts with NTN1. Interacts with MYO10. Interacts with CBLN4; this interaction can be competed by NTN1. Interacts with SIAH1 and SIAH2. Post-translationally, ubiquitinated; mediated by SIAH1 or SIAH2 and leading to its subsequent proteasomal degradation. Found in axons of the central and peripheral nervous system and in differentiated cell types of the intestine. Not expressed in colorectal tumor cells that lost their capacity to differentiate into mucus producing cells.

The protein localises to the membrane. Functionally, receptor for netrin required for axon guidance. Mediates axon attraction of neuronal growth cones in the developing nervous system upon ligand binding. Its association with UNC5 proteins may trigger signaling for axon repulsion. It also acts as a dependence receptor required for apoptosis induction when not associated with netrin ligand. Implicated as a tumor suppressor gene. This chain is Netrin receptor DCC (DCC), found in Homo sapiens (Human).